The primary structure comprises 392 residues: NAD(P)H-quinone oxidoreductase subunit H, chloroplastic (392 aa).

Belongs to the complex I 49 kDa subunit family. NDH is composed of at least 16 different subunits, 5 of which are encoded in the nucleus.

The protein localises to the plastid. It is found in the chloroplast thylakoid membrane. The catalysed reaction is a plastoquinone + NADH + (n+1) H(+)(in) = a plastoquinol + NAD(+) + n H(+)(out). The enzyme catalyses a plastoquinone + NADPH + (n+1) H(+)(in) = a plastoquinol + NADP(+) + n H(+)(out). In terms of biological role, NDH shuttles electrons from NAD(P)H:plastoquinone, via FMN and iron-sulfur (Fe-S) centers, to quinones in the photosynthetic chain and possibly in a chloroplast respiratory chain. The immediate electron acceptor for the enzyme in this species is believed to be plastoquinone. Couples the redox reaction to proton translocation, and thus conserves the redox energy in a proton gradient. The protein is NAD(P)H-quinone oxidoreductase subunit H, chloroplastic of Marchantia polymorpha (Common liverwort).